A 121-amino-acid chain; its full sequence is Large ribosomal subunit protein uL18 (121 aa).

Belongs to the universal ribosomal protein uL18 family. In terms of assembly, part of the 50S ribosomal subunit; part of the 5S rRNA/L5/L18/L25 subcomplex. Contacts the 5S and 23S rRNAs.

Functionally, this is one of the proteins that bind and probably mediate the attachment of the 5S RNA into the large ribosomal subunit, where it forms part of the central protuberance. The sequence is that of Large ribosomal subunit protein uL18 from Pelobacter propionicus (strain DSM 2379 / NBRC 103807 / OttBd1).